A 113-amino-acid polypeptide reads, in one-letter code: MHEMSIVEGIRTAIEEAARANGFAKVTRVRLEIGRLAGVERAALDFAFDVVLRGSLAEGAAVQIIDLPGQAACFDCGKTVEIEHRLDICPECGGTRLLVQGGDEMRIKDLEVL.

Ni(2+) is bound at residue histidine 2. The Zn(2+) site is built by cysteine 73, cysteine 76, cysteine 89, and cysteine 92.

Belongs to the HypA/HybF family.

In terms of biological role, involved in the maturation of [NiFe] hydrogenases. Required for nickel insertion into the metal center of the hydrogenase. The chain is Hydrogenase maturation factor HypA from Rhodobacter capsulatus (Rhodopseudomonas capsulata).